A 134-amino-acid polypeptide reads, in one-letter code: MEAKTDAPISPAPTTNPPAEAGKEPNASSNAQANPTAAPGAPPSGAIAVGQSTNPVAQQQQQPAVAKKPSSETNNMPTRQYLDQTVAPVLLHGMQALARERPTDPIQFLASYLLKHSNGCDENNASAAAVDNNS.

Residues 1-81 (MEAKTDAPIS…ETNNMPTRQY (81 aa)) form a disordered region. The segment covering 31–68 (AQANPTAAPGAPPSGAIAVGQSTNPVAQQQQQPAVAKK) has biased composition (low complexity). Polar residues predominate over residues 71 to 81 (SETNNMPTRQY).

This sequence belongs to the dpy-30 family. As to quaternary structure, core component of several methyltransferase-containing complexes. Component of the SET1 complex, composed at least of the catalytic subunit Set1, wds/WDR5, Wdr82, Rbbp5, ash2, Cfp1/CXXC1, hcf and Dpy-30L1. Component of the MLL3/4 complex composed at least of the catalytic subunit trr, ash2, Rbbp5, Dpy-30L1, wds, hcf, ptip, Pa1, Utx, Lpt and Ncoa6. As to expression, expressed in larval brain, gonad, imaginal disk and salivary gland and in adult brain, testis, ovary and salivary gland.

Its subcellular location is the nucleus. In terms of biological role, component of the SET1 complex that specifically di- and trimethylates 'Lys-4' of histone H3 and of the MLL3/4 complex which also methylates histone H3 'Lys-4'. Inhibits MTF-1 transcription factor activity. This chain is Protein dpy-30 homolog, found in Drosophila melanogaster (Fruit fly).